The sequence spans 101 residues: Apolipoprotein C-II (101 aa).

The first 22 residues, 1–22 (MGTRFLLALFLVLLVLGFEVQG), serve as a signal peptide directing secretion. The tract at residues 66–74 (TVDEKLRDM) is lipid binding. The interval 78–101 (STAAMSTYAGILTDQVLSMLKGEE) is lipoprotein lipase cofactor.

The protein belongs to the apolipoprotein C2 family. In terms of processing, proapolipoprotein C-II is synthesized as a sialic acid containing glycoprotein which is subsequently desialylated prior to its proteolytic processing. Proapolipoprotein C-II, the major form found in plasma undergoes proteolytic cleavage of its N-terminal hexapeptide to generate apolipoprotein C-II, which occurs as the minor form in plasma.

It localises to the secreted. In terms of biological role, component of chylomicrons, very low-density lipoproteins (VLDL), low-density lipoproteins (LDL), and high-density lipoproteins (HDL) in plasma. Plays an important role in lipoprotein metabolism as an activator of lipoprotein lipase. Both proapolipoprotein C-II and apolipoprotein C-II can activate lipoprotein lipase. The chain is Apolipoprotein C-II (APOC2) from Aotus nancymaae (Ma's night monkey).